Here is a 946-residue protein sequence, read N- to C-terminus: Villin-4 (946 aa).

Gelsolin-like repeat units lie at residues 28-109 (NFKP…ETEK), 152-219 (VHVK…EDGK), 274-339 (LEHE…TIMF), and 641-715 (EIHH…PQFF). Disordered regions lie at residues 744–783 (ATPS…ERHR) and 846–902 (TKST…PAPD). Polar residues predominate over residues 765–777 (QDKSQQRTRSMSH). A compositionally biased stretch (acidic residues) spans 874-883 (SENEPEDDEN). In terms of domain architecture, HP spans 881-946 (DENSTIYPYE…NRLKSDLQLF (66 aa)).

Belongs to the villin/gelsolin family.

It localises to the cytoplasm. The protein resides in the cytoskeleton. Its function is as follows. Ca(2+)-regulated actin-binding protein. Binds actin microfilaments (MFs). Involved in actin filament bundling, severing and capping. Caps the barbed end of actin filaments and is able to sever them in a calcium-dependent manner. This chain is Villin-4, found in Oryza sativa subsp. indica (Rice).